The following is a 33-amino-acid chain: Lysozyme C, spleen isozyme (33 aa).

This sequence belongs to the glycosyl hydrolase 22 family. As to quaternary structure, monomer.

It carries out the reaction Hydrolysis of (1-&gt;4)-beta-linkages between N-acetylmuramic acid and N-acetyl-D-glucosamine residues in a peptidoglycan and between N-acetyl-D-glucosamine residues in chitodextrins.. Its function is as follows. Lysozymes have primarily a bacteriolytic function; those in tissues and body fluids are associated with the monocyte-macrophage system and enhance the activity of immunoagents. In Equus caballus (Horse), this protein is Lysozyme C, spleen isozyme.